The chain runs to 359 residues: Dual-specificity RNA methyltransferase RlmN (359 aa).

Glutamate 90 (proton acceptor) is an active-site residue. One can recognise a Radical SAM core domain in the interval 109–342 (HQERYTVCIS…CTIRESKGLD (234 aa)). Cysteine 116 and cysteine 347 are oxidised to a cystine. [4Fe-4S] cluster-binding residues include cysteine 123, cysteine 127, and cysteine 130. S-adenosyl-L-methionine contacts are provided by residues 173-174 (GE), serine 205, 228-230 (SLH), and asparagine 304. Cysteine 347 (S-methylcysteine intermediate) is an active-site residue.

It belongs to the radical SAM superfamily. RlmN family. [4Fe-4S] cluster is required as a cofactor.

The protein localises to the cytoplasm. The enzyme catalyses adenosine(2503) in 23S rRNA + 2 reduced [2Fe-2S]-[ferredoxin] + 2 S-adenosyl-L-methionine = 2-methyladenosine(2503) in 23S rRNA + 5'-deoxyadenosine + L-methionine + 2 oxidized [2Fe-2S]-[ferredoxin] + S-adenosyl-L-homocysteine. The catalysed reaction is adenosine(37) in tRNA + 2 reduced [2Fe-2S]-[ferredoxin] + 2 S-adenosyl-L-methionine = 2-methyladenosine(37) in tRNA + 5'-deoxyadenosine + L-methionine + 2 oxidized [2Fe-2S]-[ferredoxin] + S-adenosyl-L-homocysteine. Functionally, specifically methylates position 2 of adenine 2503 in 23S rRNA and position 2 of adenine 37 in tRNAs. m2A2503 modification seems to play a crucial role in the proofreading step occurring at the peptidyl transferase center and thus would serve to optimize ribosomal fidelity. This Sulfurovum sp. (strain NBC37-1) protein is Dual-specificity RNA methyltransferase RlmN.